The following is a 525-amino-acid chain: Alpha-ketoglutaric semialdehyde dehydrogenase 2 (525 aa).

Residues Lys185, Glu188, and 242–247 (GSRQGG) each bind NAD(+). Glu266 functions as the Proton acceptor in the catalytic mechanism. Catalysis depends on Cys303, which acts as the Nucleophile. Glu394 contacts NAD(+).

This sequence belongs to the aldehyde dehydrogenase family. As to quaternary structure, homodimer.

It carries out the reaction 2,5-dioxopentanoate + NADP(+) + H2O = 2-oxoglutarate + NADPH + 2 H(+). The catalysed reaction is 2,5-dioxopentanoate + NAD(+) + H2O = 2-oxoglutarate + NADH + 2 H(+). The protein operates within carbohydrate acid metabolism; D-glucarate degradation. It functions in the pathway carbohydrate acid metabolism; galactarate degradation. Its function is as follows. Catalyzes the NAD(P)(+)-dependent oxidation of alpha-ketoglutaric semialdehyde (alphaKGSA) to alpha-ketoglutarate. Involved in D-glucarate/D-galactarate metabolism. Prefers NAD(+) to NADP(+) as a cosubstrate. This chain is Alpha-ketoglutaric semialdehyde dehydrogenase 2, found in Azospirillum brasilense.